Here is a 107-residue protein sequence, read N- to C-terminus: MARATLSAAPSNPRLLRVALLLLLLVAASRRAAGAPLATELRCQCLQTLQGIHLKNIQSVKVKSPGPHCAQTEVIATLKNGQKACLNPASPMVKKIIEKMLKNGKSN.

Residues 1 to 34 form the signal peptide; sequence MARATLSAAPSNPRLLRVALLLLLLVAASRRAAG. 2 disulfides stabilise this stretch: cysteine 43–cysteine 69 and cysteine 45–cysteine 85.

The protein belongs to the intercrine alpha (chemokine CxC) family. Post-translationally, the N-terminal processed form GRO-beta(5-73) is produced by proteolytic cleavage after secretion from bone marrow stromal cells.

It is found in the secreted. In terms of biological role, produced by activated monocytes and neutrophils and expressed at sites of inflammation. Hematoregulatory chemokine, which, in vitro, suppresses hematopoietic progenitor cell proliferation. GRO-beta(5-73) shows a highly enhanced hematopoietic activity. This Homo sapiens (Human) protein is C-X-C motif chemokine 2 (CXCL2).